Consider the following 947-residue polypeptide: Receptor-like protein 56 (947 aa).

The signal sequence occupies residues Met-1–Cys-27. Residues Ile-28–Met-899 lie on the Extracellular side of the membrane. N-linked (GlcNAc...) asparagine glycans are attached at residues Asn-60, Asn-75, and Asn-98. LRR repeat units follow at residues Phe-105–Tyr-128, Leu-134–Ala-157, Thr-159–Asn-182, Leu-183–Tyr-207, Lys-209–Asn-232, Leu-233–Glu-257, Lys-259–Asn-281, Leu-282–Ser-305, and Glu-307–Asn-330. N-linked (GlcNAc...) asparagine glycosylation is found at Asn-141, Asn-148, and Asn-182. N-linked (GlcNAc...) asparagine glycosylation is present at Asn-232. Asn-330 is a glycosylation site (N-linked (GlcNAc...) asparagine). The stretch at Thr-332 to Pro-356 is one LRR 10; degenerate repeat. LRR repeat units lie at residues Leu-357–Gln-380, Lys-381–Asn-404, Asn-405–Val-427, His-428–Arg-450, Leu-452–Met-476, Tyr-477–Ser-500, Phe-502–Ser-527, Ile-529–Leu-549, Val-550–Tyr-575, Asn-577–Asn-598, Leu-600–Leu-616, Gly-617–Gln-640, Ile-642–Phe-663, Ser-664–Asn-686, Leu-757–Asp-780, Leu-781–Lys-804, Leu-805–Leu-829, and Ser-831–Thr-854. An N-linked (GlcNAc...) asparagine glycan is attached at Asn-415. N-linked (GlcNAc...) asparagine glycans are attached at residues Asn-459, Asn-478, Asn-488, and Asn-524. N-linked (GlcNAc...) asparagine glycosylation occurs at Asn-606. Residue Asn-686 is glycosylated (N-linked (GlcNAc...) asparagine). N-linked (GlcNAc...) asparagine glycans are attached at residues Asn-788, Asn-828, Asn-836, and Asn-841. The chain crosses the membrane as a helical span at residues Leu-900–Leu-920. Topologically, residues Met-921–Ala-947 are cytoplasmic.

It belongs to the RLP family.

The protein localises to the cell membrane. The chain is Receptor-like protein 56 from Arabidopsis thaliana (Mouse-ear cress).